We begin with the raw amino-acid sequence, 124 residues long: Large ribosomal subunit protein bL12 (124 aa).

This sequence belongs to the bacterial ribosomal protein bL12 family. In terms of assembly, homodimer. Part of the ribosomal stalk of the 50S ribosomal subunit. Forms a multimeric L10(L12)X complex, where L10 forms an elongated spine to which 2 to 4 L12 dimers bind in a sequential fashion. Binds GTP-bound translation factors.

Functionally, forms part of the ribosomal stalk which helps the ribosome interact with GTP-bound translation factors. Is thus essential for accurate translation. In Brucella anthropi (strain ATCC 49188 / DSM 6882 / CCUG 24695 / JCM 21032 / LMG 3331 / NBRC 15819 / NCTC 12168 / Alc 37) (Ochrobactrum anthropi), this protein is Large ribosomal subunit protein bL12.